The following is a 347-amino-acid chain: Elongation factor Ts (347 aa).

An involved in Mg(2+) ion dislocation from EF-Tu region spans residues 80-83 (TDFV).

Belongs to the EF-Ts family.

Its subcellular location is the cytoplasm. In terms of biological role, associates with the EF-Tu.GDP complex and induces the exchange of GDP to GTP. It remains bound to the aminoacyl-tRNA.EF-Tu.GTP complex up to the GTP hydrolysis stage on the ribosome. This is Elongation factor Ts from Streptococcus gordonii (strain Challis / ATCC 35105 / BCRC 15272 / CH1 / DL1 / V288).